The chain runs to 393 residues: Riboflavin biosynthesis protein RibBA (393 aa).

Residues 1–200 (MQLDSIDTAL…IEDLEKYRKS (200 aa)) are DHBP synthase. Residues 27–28 (RE), D32, 139–143 (RRGHT), and E163 each bind D-ribulose 5-phosphate. E28 contributes to the Mg(2+) binding site. H142 is a Mg(2+) binding site. The segment at 201–393 (SISKLDAKAK…TKKEKMGHLI (193 aa)) is GTP cyclohydrolase II. 249-253 (RIHSA) serves as a coordination point for GTP. Residues C254, C265, and C267 each contribute to the Zn(2+) site. Residues Q270, 291-293 (EGR), and T313 contribute to the GTP site. D325 functions as the Proton acceptor; for GTP cyclohydrolase activity in the catalytic mechanism. R327 (nucleophile; for GTP cyclohydrolase activity) is an active-site residue. GTP contacts are provided by S348 and K353.

The protein in the N-terminal section; belongs to the DHBP synthase family. It in the C-terminal section; belongs to the GTP cyclohydrolase II family. Mg(2+) is required as a cofactor. Requires Mn(2+) as cofactor. Zn(2+) serves as cofactor.

It carries out the reaction D-ribulose 5-phosphate = (2S)-2-hydroxy-3-oxobutyl phosphate + formate + H(+). It catalyses the reaction GTP + 4 H2O = 2,5-diamino-6-hydroxy-4-(5-phosphoribosylamino)-pyrimidine + formate + 2 phosphate + 3 H(+). It functions in the pathway cofactor biosynthesis; riboflavin biosynthesis; 2-hydroxy-3-oxobutyl phosphate from D-ribulose 5-phosphate: step 1/1. It participates in cofactor biosynthesis; riboflavin biosynthesis; 5-amino-6-(D-ribitylamino)uracil from GTP: step 1/4. In terms of biological role, catalyzes the conversion of D-ribulose 5-phosphate to formate and 3,4-dihydroxy-2-butanone 4-phosphate. Catalyzes the conversion of GTP to 2,5-diamino-6-ribosylamino-4(3H)-pyrimidinone 5'-phosphate (DARP), formate and pyrophosphate. This chain is Riboflavin biosynthesis protein RibBA, found in Staphylococcus saprophyticus subsp. saprophyticus (strain ATCC 15305 / DSM 20229 / NCIMB 8711 / NCTC 7292 / S-41).